We begin with the raw amino-acid sequence, 123 residues long: Large ribosomal subunit protein uL18 (123 aa).

Belongs to the universal ribosomal protein uL18 family. As to quaternary structure, part of the 50S ribosomal subunit; part of the 5S rRNA/L5/L18/L25 subcomplex. Contacts the 5S and 23S rRNAs.

In terms of biological role, this is one of the proteins that bind and probably mediate the attachment of the 5S RNA into the large ribosomal subunit, where it forms part of the central protuberance. In Wolbachia sp. subsp. Brugia malayi (strain TRS), this protein is Large ribosomal subunit protein uL18.